The primary structure comprises 37 residues: Large ribosomal subunit protein bL36 (37 aa).

Belongs to the bacterial ribosomal protein bL36 family.

The chain is Large ribosomal subunit protein bL36 from Aromatoleum aromaticum (strain DSM 19018 / LMG 30748 / EbN1) (Azoarcus sp. (strain EbN1)).